The sequence spans 173 residues: MTYLVSLLLMALIVGLIAVASNPAPYFAALGLVVAAGVGCGVLVSHGGSFLSLVLFLIYLGGMLVVFAYSAALAAEPFPEAWGDRSVVGYVMIYLLGVGLMVGVFWEGWYEGSWVVIDGLKEFSVLRGDTSGVAEMYSYGGGMLVICAWVLLLTLFVVLELTRGLSRGTIRAV.

5 helical membrane-spanning segments follow: residues 1-21, 24-44, 53-73, 86-106, and 139-159; these read MTYLVSLLLMALIVGLIAVAS, APYFAALGLVVAAGVGCGVLV, LVLFLIYLGGMLVVFAYSAAL, SVVGYVMIYLLGVGLMVGVFW, and YGGGMLVICAWVLLLTLFVVL.

It belongs to the complex I subunit 6 family.

Its subcellular location is the mitochondrion membrane. The catalysed reaction is a ubiquinone + NADH + 5 H(+)(in) = a ubiquinol + NAD(+) + 4 H(+)(out). Functionally, core subunit of the mitochondrial membrane respiratory chain NADH dehydrogenase (Complex I) that is believed to belong to the minimal assembly required for catalysis. Complex I functions in the transfer of electrons from NADH to the respiratory chain. The immediate electron acceptor for the enzyme is believed to be ubiquinone. This chain is NADH-ubiquinone oxidoreductase chain 6 (MT-ND6), found in Formosania lacustris (Oriental stream loach).